We begin with the raw amino-acid sequence, 273 residues long: 4-hydroxybenzoate octaprenyltransferase (273 aa).

8 consecutive transmembrane segments (helical) span residues 7–27 (IGIY…SEGF), 30–50 (LKLL…GCVI), 83–103 (FFVL…WLTI), 122–142 (WTYF…LMAF), 146–166 (LNEI…WTVI), 197–217 (LIIG…SNVF), 221–241 (ISYH…QYLI), and 253–273 (FLHN…SVGL).

Belongs to the UbiA prenyltransferase family. Mg(2+) serves as cofactor.

The protein localises to the cell inner membrane. The catalysed reaction is all-trans-octaprenyl diphosphate + 4-hydroxybenzoate = 4-hydroxy-3-(all-trans-octaprenyl)benzoate + diphosphate. It functions in the pathway cofactor biosynthesis; ubiquinone biosynthesis. Functionally, catalyzes the prenylation of para-hydroxybenzoate (PHB) with an all-trans polyprenyl group. Mediates the second step in the final reaction sequence of ubiquinone-8 (UQ-8) biosynthesis, which is the condensation of the polyisoprenoid side chain with PHB, generating the first membrane-bound Q intermediate 3-octaprenyl-4-hydroxybenzoate. This Vesicomyosocius okutanii subsp. Calyptogena okutanii (strain HA) protein is 4-hydroxybenzoate octaprenyltransferase.